The primary structure comprises 2195 residues: COPII coat assembly protein SEC16 (2195 aa).

A compositionally biased stretch (basic residues) spans 1 to 20; it reads MTPEAKKRKNQKKKLKQKQK. Positions 1–112 are disordered; the sequence is MTPEAKKRKN…ADSNDLPDNS (112 aa). Basic and acidic residues-rich tracts occupy residues 21-32 and 49-59; these read KAAEKAASHSEE and SVNRTESDIAS. Serine 28 is subject to Phosphoserine. Over residues 66–79 the composition is skewed to polar residues; it reads VSSSTNISPANETQ. Serine 73 bears the Phosphoserine mark. Residues 86–102 are compositionally biased toward basic and acidic residues; sequence QELHHKLLNDSDQHDIT. Position 144 is a phosphoserine (serine 144). Disordered regions lie at residues 201–233, 247–381, 436–555, 594–616, and 643–708; these read PSDG…INDD, NVLP…FHGH, TQSS…KASR, GTPN…VKDN, and SKKG…QSPV. The span at 210–219 shows a compositional bias: polar residues; it reads ELSSGDTPTH. Positions 257–276 are enriched in basic and acidic residues; that stretch reads EDERLKLETHVSTEEKKQDI. Positions 282–292 are enriched in polar residues; it reads AENLFTSSTEP. Residue serine 313 is modified to Phosphoserine. Basic and acidic residues predominate over residues 314-329; sequence DQKVPWEEDVKKDFHN. Residues 330–341 show a composition bias toward polar residues; the sequence is ENTNNTQESAPN. Basic and acidic residues-rich tracts occupy residues 342–381 and 450–479; these read TDDR…FHGH and STDK…EKLP. A phosphoserine mark is found at serine 472 and serine 483. A compositionally biased stretch (polar residues) spans 489 to 501; that stretch reads SGKTENSMQTSTE. Acidic residues predominate over residues 512–533; sequence ENDDDLLDDDDSFLASSEEEDT. Composition is skewed to polar residues over residues 534–545 and 594–604; these read VPNTDNTTNLTS and GTPNQQVSVPN. Position 595 is a phosphothreonine (threonine 595). Phosphoserine occurs at positions 607, 660, 663, 665, 674, 678, 681, 701, 704, 706, 759, 762, 765, 768, 843, 1511, 1515, 1578, 1602, 1603, 1611, and 1617. Positions 657–666 are enriched in polar residues; the sequence is RFGSGNSFSS. Residues 693-708 are compositionally biased toward polar residues; the sequence is EPRSSRTNSAISQSPV. 2 disordered regions span residues 1656–1731 and 1751–1804; these read VHET…TVNP and GTDA…QDEN. Basic and acidic residues predominate over residues 1673 to 1682; it reads MPEDESHTSH. Composition is skewed to polar residues over residues 1683-1693 and 1775-1786; these read DNSNADQNTLK and ENISKSASSAYL. Serine 1778 and serine 1875 each carry phosphoserine. Residues 1917-1936 are disordered; that stretch reads SFELSESTSQAQSNGNVASE. Residues serine 1973, serine 1986, and serine 1992 each carry the phosphoserine modification. The segment at 1976–2031 is disordered; the sequence is DKYNDVIEDESDDDNMSTDEAKNRKEEKKNVNMKKETKPSNKDIDDKSNGWFGWLK. Residues 1981-1992 show a composition bias toward acidic residues; the sequence is VIEDESDDDNMS. The span at 1994-2023 shows a compositional bias: basic and acidic residues; it reads DEAKNRKEEKKNVNMKKETKPSNKDIDDKS. At threonine 2049 the chain carries Phosphothreonine. Residues 2054 to 2072 show a composition bias toward basic and acidic residues; sequence EKLKRWVNKDATEEEKQKI. Residues 2054–2195 are disordered; that stretch reads EKLKRWVNKD…GYVNVMDNIQ (142 aa). Serine 2130 is subject to Phosphoserine. Residues 2131–2143 show a composition bias toward pro residues; sequence PTGPNPNNSPSPS.

This sequence belongs to the SEC16 family. As to quaternary structure, interacts with SEC23, SEC31 and SED4.

It is found in the endoplasmic reticulum membrane. Its function is as follows. Involved in the initiation of assembly of the COPII coat required for the formation of transport vesicles from the endoplasmic reticulum (ER) and the selection of cargo molecules. Also involved in autophagy. This chain is COPII coat assembly protein SEC16 (SEC16), found in Saccharomyces cerevisiae (strain ATCC 204508 / S288c) (Baker's yeast).